We begin with the raw amino-acid sequence, 418 residues long: L-rhamnose isomerase (418 aa).

Mn(2+)-binding residues include His262, Asp294, and Asp296.

The protein belongs to the rhamnose isomerase family. Homotetramer. Mn(2+) serves as cofactor.

The protein resides in the cytoplasm. It catalyses the reaction L-rhamnopyranose = L-rhamnulose. The protein operates within carbohydrate degradation; L-rhamnose degradation; glycerone phosphate from L-rhamnose: step 1/3. Functionally, catalyzes the interconversion of L-rhamnose and L-rhamnulose. This chain is L-rhamnose isomerase, found in Cronobacter sakazakii (strain ATCC BAA-894) (Enterobacter sakazakii).